A 2309-amino-acid chain; its full sequence is Collagen alpha-4(VI) chain (2309 aa).

An N-terminal signal peptide occupies residues 1-22 (MGTWKTFWLIISLAAGLGFVKS). The segment at 21–1410 (KSQRIVCREA…TCCNMYAKCY (1390 aa)) is nonhelical region. 6 VWFA domains span residues 34–206 (DIVF…AQKL), 235–413 (DIVF…LQAL), 430–653 (DVVF…FQRV), 634–811 (DLVF…GNKL), 849–1018 (DIYF…IRDI), and 1030–1199 (DIIF…EKEI). N-linked (GlcNAc...) asparagine glycosylation occurs at Asn188. An N-linked (GlcNAc...) asparagine glycan is attached at Asn754. The N-linked (GlcNAc...) asparagine glycan is linked to Asn1114. The tract at residues 1411–1744 (GDDGIRGEPG…GKMGTKGSKG (334 aa)) is triple-helical region. Basic and acidic residues predominate over residues 1414–1430 (GIRGEPGSRGEQGERGL). Residues 1414–1746 (GIRGEPGSRG…MGTKGSKGLA (333 aa)) form a disordered region. The span at 1480-1489 (GEEGVGGLDG) shows a compositional bias: gly residues. Residues 1527 to 1529 (RGD) carry the Cell attachment site motif. Composition is skewed to low complexity over residues 1605–1621 (PRGR…KGDP) and 1650–1669 (PAGE…PGLF). The interval 1745-2309 (LADRTPCEIV…EGECLNYVLK (565 aa)) is nonhelical region. 2 VWFA domains span residues 1776–1957 (EVVF…ASCT) and 1982–2187 (DLVF…LNLL). The Cell attachment site signature appears at 2208–2210 (RGD). A disordered region spans residues 2262-2300 (ALGSHGKDRADTEDIDQETPAKGRHLGPTHGPCPMGPEE).

It belongs to the type VI collagen family. In terms of assembly, trimers composed of three different chains: alpha-1(VI), alpha-2(VI), and alpha-3(VI) or alpha-4(VI) or alpha-5(VI) or alpha-6(VI). Prolines at the third position of the tripeptide repeating unit (G-X-Y) are hydroxylated in some or all of the chains. As to expression, in newborn, it is expressed in lung, kidney, brain, intestine, skin, sternum and, at weak level, calvaria. In adult, it is almost absent with some weak expression in ovary and very weak expression in spleen, lung, uterus and brain.

It localises to the secreted. Its subcellular location is the extracellular space. The protein resides in the extracellular matrix. Collagen VI acts as a cell-binding protein. The protein is Collagen alpha-4(VI) chain (Col6a4) of Mus musculus (Mouse).